A 189-amino-acid chain; its full sequence is ADP-ribosylation factor H (189 aa).

Residues 34–40, 75–79, and 134–137 contribute to the GTP site; these read DGAGKST, DVGGQ, and NKQD.

Belongs to the small GTPase superfamily. Arf family.

It localises to the golgi apparatus. Its function is as follows. GTP-binding protein that may be involved in protein trafficking. May modulate vesicle budding and uncoating within the Golgi apparatus. The protein is ADP-ribosylation factor H (arrH) of Dictyostelium discoideum (Social amoeba).